The primary structure comprises 245 residues: Eukaryotic translation initiation factor 6-2 (245 aa).

Belongs to the eIF-6 family. In terms of assembly, monomer. Associates with the 60S ribosomal subunit.

The protein resides in the cytoplasm. It is found in the nucleus. Its subcellular location is the nucleolus. Its function is as follows. Binds to the 60S ribosomal subunit and prevents its association with the 40S ribosomal subunit to form the 80S initiation complex in the cytoplasm. May also be involved in ribosome biogenesis. The protein is Eukaryotic translation initiation factor 6-2 of Arabidopsis thaliana (Mouse-ear cress).